A 621-amino-acid chain; its full sequence is Auxin response factor 13 (621 aa).

A DNA-binding region (TF-B3) is located at residues 124 to 228; sequence FSKILTASDV…ELRFGIRRAK (105 aa). The region spanning 508–600 is the PB1 domain; that stretch reads RSRIKVHMQG…EIKKMKLKNK (93 aa).

It belongs to the ARF family. As to quaternary structure, homodimers and heterodimers.

It is found in the nucleus. Functionally, auxin response factors (ARFs) are transcriptional factors that bind specifically to the DNA sequence 5'-TGTCTC-3' found in the auxin-responsive promoter elements (AuxREs). Could act as transcriptional activator or repressor. Formation of heterodimers with Aux/IAA proteins may alter their ability to modulate early auxin response genes expression. The sequence is that of Auxin response factor 13 (ARF13) from Arabidopsis thaliana (Mouse-ear cress).